An 809-amino-acid polypeptide reads, in one-letter code: MAYEASLIEKKWQKIWDENEYFEPKDDLNLPKKYILSMFPYPSGRIHMGHVRNYTIGDVLARYYRKIGFNVLHPIGFDSFGMPAENAAIKHKIHPKSWTYENIAYMKKELFSLGFSFSKKRMLATSDPLYTKFEQEFFIKMFEKGLIYTKEANVNWCEQDQTVLANEQVEDGKCWRCGHEVVQKKMPGYYVKITAYAEELLKDLEELKDKWPNQVLTMQENWIGKSEGLEFSLNLDEESKQKTKESSLEVFTTRADTIYGVSYIALAPEHKIVQNLLSQNLLNQDVLNKIKVIQNQSPRERQSSEKEGYFLGIYAIHPLSGEKIPLWVANFVLADYGSGAVMAVPAHDERDFEFATKYNLAIKQVIQTQENLPYTQKSGKLIHSQEFDNLDCNEARLKIISQFEAKNIGKRVVNFKIRDWGVSRQRYWGAPIPMIKCQICGIVPQKLENLPITLPEDVQITGEGNPLDKHPTWKNCICPKCGKEAQKESDTLDTFFESSWYFARFASDEKTWQEKALDEKSVKYWMSVDQYIGGIEHAILHLLYARFFQKALRDLGYLTQNEPFDRLLTQGMVLKDGAKMSKSKGNVVDPDEIIEKYGADTARLFILFAAPPAKELEWNDDAVEGAYRFICKLYDRAQNVKKGELVELKQENLNKEEKYARLKVYEALKKSFEVYHQSFAFNTLIAACMEALNALALCKNEALEQEAFYIILNILEPIIPHVCFELSEELFKCKNFKKLELKEEVFVKDTLNLAVSINGKKRAEFEISSSASKEEILAFAKENTAKWLEGKSIVKEIYVEGKLVNLVIK.

The short motif at 40 to 50 (PYPSGRIHMGH) is the 'HIGH' region element. The 'KMSKS' region motif lies at 579–583 (KMSKS). Lys582 provides a ligand contact to ATP.

It belongs to the class-I aminoacyl-tRNA synthetase family.

The protein localises to the cytoplasm. The catalysed reaction is tRNA(Leu) + L-leucine + ATP = L-leucyl-tRNA(Leu) + AMP + diphosphate. This is Leucine--tRNA ligase from Campylobacter jejuni (strain RM1221).